The sequence spans 76 residues: Conotoxin Bu28 (76 aa).

The first 24 residues, 1 to 24, serve as a signal peptide directing secretion; the sequence is MTSVQSATCCCLLWLVLCVQLVTP. The propeptide occupies 25–39; that stretch reads DSPATAQLSRHLTAR. 2 cysteine pairs are disulfide-bonded: Cys50–Cys63 and Cys54–Cys65. Arg69 carries the post-translational modification Arginine amide. A propeptide spanning residues 71 to 76 is cleaved from the precursor; sequence VVSSSI.

It belongs to the conotoxin J superfamily. As to expression, expressed by the venom duct.

Its subcellular location is the secreted. Its function is as follows. Highly inhibits both nicotinic acetylcholine receptors (neuronal (alpha-3/beta-4) and muscular (alpha-1/beta-1/epsilon/delta) subtypes) and the voltage-gated potassium channel Kv1.6/KCNA6 subtype. This is Conotoxin Bu28 from Conus bullatus (Bubble cone).